A 123-amino-acid chain; its full sequence is Large ribosomal subunit protein uL24 (123 aa).

Residues 100 to 123 form a disordered region; it reads RRPDGSTYKAERSVRISRKTGKEI.

This sequence belongs to the universal ribosomal protein uL24 family. Part of the 50S ribosomal subunit.

Its function is as follows. One of two assembly initiator proteins, it binds directly to the 5'-end of the 23S rRNA, where it nucleates assembly of the 50S subunit. One of the proteins that surrounds the polypeptide exit tunnel on the outside of the subunit. This is Large ribosomal subunit protein uL24 from Nocardioides sp. (strain ATCC BAA-499 / JS614).